The primary structure comprises 624 residues: Glyco-Gag protein (624 aa).

The Cytoplasmic portion of the chain corresponds to 1-63 (LGDVPGTSGA…FLPSVWNRSR (63 aa)). Residues 64 to 86 (AARLVCCSIVLCCLCLAVFLYWS) form a helical membrane-spanning segment. Residues 87–624 (ENMGQTVTTP…PQTSLLALDD (538 aa)) lie on the Extracellular side of the membrane. The N-linked (GlcNAc...) asparagine; by host glycan is linked to N113. 2 stretches are compositionally biased toward pro residues: residues 200–209 (PSLLPEPPLS) and 247–258 (DPPPYRDPGPPP). Disordered stretches follow at residues 200–284 (PSLL…ASRL) and 290–309 (LPVA…GGNG). N-linked (GlcNAc...) asparagine; by host glycosylation is present at N478. Basic and acidic residues-rich tracts occupy residues 520-552 (RETP…EKER) and 572-605 (KQDR…DCPK). Residues 520–624 (RETPEEREER…PQTSLLALDD (105 aa)) form a disordered region.

In terms of processing, glycosylated by host. Post-translationally, cleaved by host near the middle of the molecule, releasing the c-terminal half containing capsid and nucleoprotein domains op GAG.

It is found in the host cell membrane. Its function is as follows. Plays a role in viral particle release. Presumably acts by facilitating the fission of the virion bud at the cell surface. May prevent the antiviral activity of murine APOBEC3. In Mus musculus (Mouse), this protein is Glyco-Gag protein.